The chain runs to 397 residues: Argininosuccinate synthase (397 aa).

Residue 9 to 17 (AYSGGLDTS) coordinates ATP. Residue tyrosine 85 participates in L-citrulline binding. Residue glycine 115 coordinates ATP. 3 residues coordinate L-aspartate: threonine 117, asparagine 121, and aspartate 122. Residue asparagine 121 coordinates L-citrulline. L-citrulline contacts are provided by arginine 125, serine 173, glutamate 258, and tyrosine 270.

It belongs to the argininosuccinate synthase family. Type 1 subfamily. In terms of assembly, homotetramer.

It localises to the cytoplasm. The catalysed reaction is L-citrulline + L-aspartate + ATP = 2-(N(omega)-L-arginino)succinate + AMP + diphosphate + H(+). Its pathway is amino-acid biosynthesis; L-arginine biosynthesis; L-arginine from L-ornithine and carbamoyl phosphate: step 2/3. This Streptococcus suis (strain 05ZYH33) protein is Argininosuccinate synthase.